A 291-amino-acid polypeptide reads, in one-letter code: Undecaprenyl-diphosphatase 2 (291 aa).

6 helical membrane passes run 39–59 (PGAA…LIYF), 85–105 (AQMG…GVTL), 118–138 (ITAT…RLAA), 203–223 (FLLA…DAAA), 231–251 (PTVF…AWFM), and 262–282 (FVWY…TGAL).

This sequence belongs to the UppP family.

The protein resides in the cell membrane. It carries out the reaction di-trans,octa-cis-undecaprenyl diphosphate + H2O = di-trans,octa-cis-undecaprenyl phosphate + phosphate + H(+). Its function is as follows. Catalyzes the dephosphorylation of undecaprenyl diphosphate (UPP). Confers resistance to bacitracin. The polypeptide is Undecaprenyl-diphosphatase 2 (Streptomyces avermitilis (strain ATCC 31267 / DSM 46492 / JCM 5070 / NBRC 14893 / NCIMB 12804 / NRRL 8165 / MA-4680)).